The sequence spans 351 residues: MNVAIVGATGYGGIQAVNLLKKNKNYKISFLGGNKTSGSKWNDNFPFIYLDNDPYVEEISVDNISKNSDVALLCLPNGLSSTLTRKLLERGLKVIDLSADYRYKSLDEWKKVYSKEAAIYKRNDDDLCKEAVYGLPEINKEAISKGRLIACPGCYPTSALIPLAPYLSQGIIENEGIVIDSKSGTSGGGREPNQKLLLSECGEGLSAYGLINHRHTSEIEQVASLISGNKIELLFTPHLVPIPRGMHSTIYGRLRDPGLTSDDCRILLDNYYRNFKNIKVLPVDTFPSTKWVKNTNQIFLSVKVDIRNGRIIILSAIDNLLKGQTGQAIQNLNIMSGFSMDEGLELTNNYP.

The active site involves Cys154.

The protein belongs to the NAGSA dehydrogenase family. Type 1 subfamily.

Its subcellular location is the cytoplasm. The enzyme catalyses N-acetyl-L-glutamate 5-semialdehyde + phosphate + NADP(+) = N-acetyl-L-glutamyl 5-phosphate + NADPH + H(+). The protein operates within amino-acid biosynthesis; L-arginine biosynthesis; N(2)-acetyl-L-ornithine from L-glutamate: step 3/4. Its function is as follows. Catalyzes the NADPH-dependent reduction of N-acetyl-5-glutamyl phosphate to yield N-acetyl-L-glutamate 5-semialdehyde. This chain is N-acetyl-gamma-glutamyl-phosphate reductase, found in Prochlorococcus marinus (strain MIT 9215).